Consider the following 688-residue polypeptide: MIOREX complex component 1 (688 aa).

The interval 1-24 (MGLKITKGQLRTKDLNQSSSKSSQ) is disordered. Residues 1 to 46 (MGLKITKGQLRTKDLNQSSSKSSQSSRIGVDTCIFTRMLPRINTAI) constitute a mitochondrion transit peptide.

As to quaternary structure, associates with the mitochondrial ribosome.

It is found in the mitochondrion. Component of MIOREX complexes, large expressome-like assemblies of ribosomes with factors involved in all the steps of post-transcriptional gene expression. The protein is MIOREX complex component 1 of Saccharomyces cerevisiae (strain ATCC 204508 / S288c) (Baker's yeast).